The sequence spans 197 residues: Probable GTP-binding protein EngB (197 aa).

Residues Thr22–Gln197 enclose the EngB-type G domain. Residues Gly30–Ser37, Gly57–Leu61, Asp75–Gly78, Thr142–Asp145, and Phe177–Ser179 each bind GTP. Ser37 and Thr59 together coordinate Mg(2+).

It belongs to the TRAFAC class TrmE-Era-EngA-EngB-Septin-like GTPase superfamily. EngB GTPase family. The cofactor is Mg(2+).

In terms of biological role, necessary for normal cell division and for the maintenance of normal septation. In Francisella philomiragia subsp. philomiragia (strain ATCC 25017 / CCUG 19701 / FSC 153 / O#319-036), this protein is Probable GTP-binding protein EngB.